Consider the following 388-residue polypeptide: MKWFGVLGLVTLSECLVTIPLVKIKSLRENLREKDMLKEYLEKYPFRLTHKLLHKHADSGVAFEPMRNYLDIAYMGIISVGTPPQEFQVIFDTGSADLWVPSIYCSSPACSNHNTFNPLRSSTFVASGQPIKLIYGTGKMSGFVGYDTIKISSLVDRNQAFGLSVEEPDKILELATFDGILGLSYPSLSVKGVTPVFDNLWNQGLLSQKLFAFYLSRKGKKGSVVMFGGVDPSYYTGELHWVPVSKPLYWQISMDSISINGKVIACDGGCQAIVDTGTSLLLGPQDAVLNIQEIIQARRSTSGEYFIDCDAVNTLPDILFTIDGIGYPVPANAYIQKDAALGICFSSFEGNEDISNNSEEWILGDVFLRLYFTVFDRENDRIGLATAV.

The signal sequence occupies residues 1 to 15 (MKWFGVLGLVTLSEC). The region spanning 74–385 (YMGIISVGTP…DRENDRIGLA (312 aa)) is the Peptidase A1 domain. Asp-92 is a catalytic residue. Disulfide bonds link Cys-105-Cys-110 and Cys-266-Cys-270. Asp-275 is a catalytic residue. Cys-309 and Cys-344 are oxidised to a cystine. The N-linked (GlcNAc...) asparagine glycan is linked to Asn-356.

The protein belongs to the peptidase A1 family. As to expression, trophoblast and placental tissue.

It is found in the secreted. It localises to the extracellular space. The chain is Pregnancy-associated glycoprotein (PAG) from Equus caballus (Horse).